Reading from the N-terminus, the 213-residue chain is Uridine kinase (213 aa).

15–22 (GGSGSGKT) contributes to the ATP binding site.

This sequence belongs to the uridine kinase family.

It localises to the cytoplasm. The enzyme catalyses uridine + ATP = UMP + ADP + H(+). It catalyses the reaction cytidine + ATP = CMP + ADP + H(+). It functions in the pathway pyrimidine metabolism; CTP biosynthesis via salvage pathway; CTP from cytidine: step 1/3. Its pathway is pyrimidine metabolism; UMP biosynthesis via salvage pathway; UMP from uridine: step 1/1. In Ligilactobacillus salivarius (strain UCC118) (Lactobacillus salivarius), this protein is Uridine kinase.